The sequence spans 503 residues: ATP synthase subunit alpha (503 aa).

170–177 provides a ligand contact to ATP; the sequence is GDRATGKT.

This sequence belongs to the ATPase alpha/beta chains family. In terms of assembly, F-type ATPases have 2 components, CF(1) - the catalytic core - and CF(0) - the membrane proton channel. CF(1) has five subunits: alpha(3), beta(3), gamma(1), delta(1), epsilon(1). CF(0) has three main subunits: a(1), b(2) and c(9-12). The alpha and beta chains form an alternating ring which encloses part of the gamma chain. CF(1) is attached to CF(0) by a central stalk formed by the gamma and epsilon chains, while a peripheral stalk is formed by the delta and b chains.

Its subcellular location is the cell inner membrane. The enzyme catalyses ATP + H2O + 4 H(+)(in) = ADP + phosphate + 5 H(+)(out). Functionally, produces ATP from ADP in the presence of a proton gradient across the membrane. The alpha chain is a regulatory subunit. The chain is ATP synthase subunit alpha from Aquifex aeolicus (strain VF5).